A 549-amino-acid polypeptide reads, in one-letter code: Glucose-6-phosphate isomerase (549 aa).

Glutamate 352 serves as the catalytic Proton donor. Residues histidine 383 and lysine 511 contribute to the active site.

This sequence belongs to the GPI family.

The protein resides in the cytoplasm. It catalyses the reaction alpha-D-glucose 6-phosphate = beta-D-fructose 6-phosphate. It participates in carbohydrate biosynthesis; gluconeogenesis. The protein operates within carbohydrate degradation; glycolysis; D-glyceraldehyde 3-phosphate and glycerone phosphate from D-glucose: step 2/4. Its function is as follows. Catalyzes the reversible isomerization of glucose-6-phosphate to fructose-6-phosphate. This Methylocella silvestris (strain DSM 15510 / CIP 108128 / LMG 27833 / NCIMB 13906 / BL2) protein is Glucose-6-phosphate isomerase.